The chain runs to 391 residues: Tryptophan synthase beta chain (391 aa).

Lys84 is modified (N6-(pyridoxal phosphate)lysine).

It belongs to the TrpB family. As to quaternary structure, tetramer of two alpha and two beta chains. Pyridoxal 5'-phosphate is required as a cofactor.

The enzyme catalyses (1S,2R)-1-C-(indol-3-yl)glycerol 3-phosphate + L-serine = D-glyceraldehyde 3-phosphate + L-tryptophan + H2O. It functions in the pathway amino-acid biosynthesis; L-tryptophan biosynthesis; L-tryptophan from chorismate: step 5/5. The beta subunit is responsible for the synthesis of L-tryptophan from indole and L-serine. This Thermoanaerobacter sp. (strain X514) protein is Tryptophan synthase beta chain.